Consider the following 160-residue polypeptide: Cytochrome b6-f complex subunit 4 (160 aa).

3 helical membrane passes run 36-56 (LLYI…GLAV), 95-115 (LLGV…PFLE), and 131-151 (TVFL…TLPI).

The protein belongs to the cytochrome b family. PetD subfamily. In terms of assembly, the 4 large subunits of the cytochrome b6-f complex are cytochrome b6, subunit IV (17 kDa polypeptide, petD), cytochrome f and the Rieske protein, while the 4 small subunits are petG, petL, petM and petN. The complex functions as a dimer.

The protein localises to the plastid. Its subcellular location is the chloroplast thylakoid membrane. Functionally, component of the cytochrome b6-f complex, which mediates electron transfer between photosystem II (PSII) and photosystem I (PSI), cyclic electron flow around PSI, and state transitions. The polypeptide is Cytochrome b6-f complex subunit 4 (Amborella trichopoda).